The sequence spans 437 residues: F-box only protein 9 (437 aa).

The disordered stretch occupies residues Met1 to Asp29. Over residues Gly16 to Ala26 the composition is skewed to acidic residues. The TPR repeat unit spans residues Ala84 to Ile117. At Ser126 the chain carries Phosphoserine. The F-box domain occupies Gln175 to Ala226.

Part of the SCF (SKP1-CUL1-F-box) E3 ubiquitin-protein ligase complex SCF(FBXO9) composed of CUL1, SKP1, RBX1 and FBXO9. Interacts with TTI1 and TELO2; when TTI1 and TELO2 are phosphorylated by CK2.

The protein resides in the cytoplasm. It participates in protein modification; protein ubiquitination. In terms of biological role, substrate recognition component of a SCF (SKP1-CUL1-F-box protein) E3 ubiquitin-protein ligase complex which mediates the ubiquitination and subsequent proteasomal degradation of target proteins and plays a role in several biological processes such as cell cycle, cell proliferation, or maintenance of chromosome stability. Ubiquitinates mTORC1-bound TTI1 and TELO2 when they are phosphorylated by CK2 following growth factor deprivation, leading to their degradation. In contrast, does not mediate ubiquitination of TTI1 and TELO2 when they are part of the mTORC2 complex. As a consequence, mTORC1 is inactivated to restrain cell growth and protein translation, while mTORC2 is the activated due to the relief of feedback inhibition by mTORC1. Plays a role in maintaining epithelial cell survival by regulating the turn-over of chromatin modulator PRMT4 through ubiquitination and degradation by the proteasomal pathway. Also regulates PPARgamma stability by facilitating PPARgamma/PPARG ubiquitination and thereby plays a role in adipocyte differentiation. This Bos taurus (Bovine) protein is F-box only protein 9 (FBXO9).